We begin with the raw amino-acid sequence, 259 residues long: 5'-nucleotidase SurE (259 aa).

Residues Asp8, Asp9, Ser39, and Asn95 each coordinate a divalent metal cation.

This sequence belongs to the SurE nucleotidase family. The cofactor is a divalent metal cation.

It is found in the cytoplasm. It catalyses the reaction a ribonucleoside 5'-phosphate + H2O = a ribonucleoside + phosphate. Functionally, nucleotidase that shows phosphatase activity on nucleoside 5'-monophosphates. The chain is 5'-nucleotidase SurE from Pseudothermotoga lettingae (strain ATCC BAA-301 / DSM 14385 / NBRC 107922 / TMO) (Thermotoga lettingae).